Consider the following 203-residue polypeptide: GTP cyclohydrolase-2 (203 aa).

49 to 53 (RIHSE) contacts GTP. Cys-54, Cys-65, and Cys-67 together coordinate Zn(2+). Residues Gln-70, 92-94 (EGR), and Thr-114 contribute to the GTP site. The active-site Proton acceptor is Asp-126. Catalysis depends on Arg-128, which acts as the Nucleophile. Residues Thr-149 and Lys-154 each contribute to the GTP site.

The protein belongs to the GTP cyclohydrolase II family. Zn(2+) serves as cofactor.

The catalysed reaction is GTP + 4 H2O = 2,5-diamino-6-hydroxy-4-(5-phosphoribosylamino)-pyrimidine + formate + 2 phosphate + 3 H(+). It participates in cofactor biosynthesis; riboflavin biosynthesis; 5-amino-6-(D-ribitylamino)uracil from GTP: step 1/4. Its function is as follows. Catalyzes the conversion of GTP to 2,5-diamino-6-ribosylamino-4(3H)-pyrimidinone 5'-phosphate (DARP), formate and pyrophosphate. This Shewanella sp. (strain W3-18-1) protein is GTP cyclohydrolase-2.